Reading from the N-terminus, the 256-residue chain is Doublecortin domain-containing protein (256 aa).

Residues 71–103 (NVFERLTDTAYYTGSHRERFDEFGNGRGIAGRE) form a partial p25alpha domain region. In terms of domain architecture, Doublecortin spans 152-226 (RLMWLYRNGD…AKYLCTSGEP (75 aa)).

It localises to the cytoplasm. Its subcellular location is the cytoskeleton. In terms of biological role, specifically required in the formation and maintenance of the conoid fibers; the conoid is a component of the cytoskeletal apical complex, which is composed of a left-handed spiral of 14 fibers made from a nontubular tubulin polymer. Promotes the organization, curvature, and stability of the conoid fibers, and probably bridges other conoid components to the tubulin core. This chain is Doublecortin domain-containing protein, found in Toxoplasma gondii (strain ATCC 50861 / VEG).